A 507-amino-acid polypeptide reads, in one-letter code: Carnosic acid synthase (507 aa).

A helical transmembrane segment spans residues 6-23 (VFSLAFLAAWFIVVFPRW). Cysteine 450 contacts heme.

It belongs to the cytochrome P450 family. Heme serves as cofactor. As to expression, expressed in glandular trichomes of young leaves.

It is found in the membrane. It carries out the reaction 11-hydroxyferruginol + 3 reduced [NADPH--hemoprotein reductase] + 3 O2 = carnosate + 3 oxidized [NADPH--hemoprotein reductase] + 4 H2O + 4 H(+). The enzyme catalyses miltiradiene + 2 reduced [NADPH--hemoprotein reductase] + 2 O2 = miltiradien-20-al + 2 oxidized [NADPH--hemoprotein reductase] + 3 H2O + 2 H(+). The catalysed reaction is ferruginol + 3 reduced [NADPH--hemoprotein reductase] + 3 O2 = pisiferate + 3 oxidized [NADPH--hemoprotein reductase] + 4 H2O + 4 H(+). It participates in secondary metabolite biosynthesis; terpenoid biosynthesis. Its function is as follows. Monooxygenase involved in the biosynthesis of carnosate, a potent antioxidant labdane-related diterpene natural product. Catalyzes the oxidation of 11-hydroxyferruginol to produce carnosate. Mediates the conversion of miltiradien into miltiradien-20-al. Also involved in the production of pisiferic acid and derivative products from ferruginol. The sequence is that of Carnosic acid synthase from Rosmarinus officinalis (Rosemary).